We begin with the raw amino-acid sequence, 354 residues long: Guanine nucleotide-binding protein G(i) subunit alpha-1 (354 aa).

G2 is lipidated: N-myristoyl glycine. C3 carries S-palmitoyl cysteine lipidation. Residues 32-354 enclose the G-alpha domain; it reads REVKLLLLGA…KNNLKDCGLF (323 aa). Residues 35–48 are G1 motif; it reads KLLLLGAGESGKST. Residues 43–48, 150–151, and 175–178 each bind GTP; these read ESGKST, DS, and LRTR. S47 is a binding site for Mg(2+). The segment at 173–181 is G2 motif; the sequence is DVLRTRVKT. T181 serves as a coordination point for Mg(2+). The tract at residues 196 to 205 is G3 motif; that stretch reads FKMFDVGGQR. Residues 200–204, 269–272, and A326 contribute to the GTP site; these read DVGGQ and NKKD. The tract at residues 265 to 272 is G4 motif; it reads ILFLNKKD. The G5 motif stretch occupies residues 324–329; sequence TCATDT.

This sequence belongs to the G-alpha family. G(i/o/t/z) subfamily. As to quaternary structure, heterotrimeric G proteins are composed of 3 units; alpha, beta and gamma. The alpha chain contains the guanine nucleotide binding site. Part of a spindle orientation complex. Identified in complex with the beta subunit GNB1 and the gamma subunit GNG1. Identified in complex with the beta subunit GNB1 and the gamma subunit GNG2. GTP binding causes dissociation of the heterotrimer, liberating the individual subunits so that they can interact with downstream effector proteins. Post-translationally, myristoylation at Gly-2 is required for membrane anchoring before palmitoylation. Palmitoylation at Cys-3 varies with membrane lipid composition.

It localises to the nucleus. It is found in the cytoplasm. Its subcellular location is the cell membrane. The protein resides in the cytoskeleton. The protein localises to the microtubule organizing center. It localises to the centrosome. It is found in the cell cortex. Its subcellular location is the membrane. The enzyme catalyses GTP + H2O = GDP + phosphate + H(+). Its function is as follows. Guanine nucleotide-binding proteins (G proteins) function as transducers downstream of G protein-coupled receptors (GPCRs) in numerous signaling cascades. The alpha chain contains the guanine nucleotide binding site and alternates between an active, GTP-bound state and an inactive, GDP-bound state. Signaling by an activated GPCR promotes GDP release and GTP binding. The alpha subunit has a low GTPase activity that converts bound GTP to GDP, thereby terminating the signal. Both GDP release and GTP hydrolysis are modulated by numerous regulatory proteins. Signaling is mediated via effector proteins, such as adenylate cyclase. Inhibits adenylate cyclase activity, leading to decreased intracellular cAMP levels. Required for cortical dynein-dynactin complex recruitment during metaphase. This Oryzias latipes (Japanese rice fish) protein is Guanine nucleotide-binding protein G(i) subunit alpha-1 (gnai1).